The following is a 176-amino-acid chain: NADH-quinone oxidoreductase subunit B 1 (176 aa).

Residues Cys-55, Cys-56, Cys-120, and Cys-150 each coordinate [4Fe-4S] cluster.

The protein belongs to the complex I 20 kDa subunit family. As to quaternary structure, NDH-1 is composed of 14 different subunits. Subunits NuoB, C, D, E, F, and G constitute the peripheral sector of the complex. The cofactor is [4Fe-4S] cluster.

The protein localises to the cell inner membrane. It carries out the reaction a quinone + NADH + 5 H(+)(in) = a quinol + NAD(+) + 4 H(+)(out). Functionally, NDH-1 shuttles electrons from NADH, via FMN and iron-sulfur (Fe-S) centers, to quinones in the respiratory chain. Couples the redox reaction to proton translocation (for every two electrons transferred, four hydrogen ions are translocated across the cytoplasmic membrane), and thus conserves the redox energy in a proton gradient. This chain is NADH-quinone oxidoreductase subunit B 1, found in Cereibacter sphaeroides (strain ATCC 17029 / ATH 2.4.9) (Rhodobacter sphaeroides).